Here is a 356-residue protein sequence, read N- to C-terminus: Methionine import ATP-binding protein MetN 1 (356 aa).

The region spanning 15–254 (IQIRALNKTY…PVQPITQELL (240 aa)) is the ABC transporter domain. ATP is bound at residue 51-58 (GKSGAGKS).

This sequence belongs to the ABC transporter superfamily. Methionine importer (TC 3.A.1.24) family. As to quaternary structure, the complex is composed of two ATP-binding proteins (MetN), two transmembrane proteins (MetI) and a solute-binding protein (MetQ).

Its subcellular location is the cell inner membrane. The catalysed reaction is L-methionine(out) + ATP + H2O = L-methionine(in) + ADP + phosphate + H(+). It catalyses the reaction D-methionine(out) + ATP + H2O = D-methionine(in) + ADP + phosphate + H(+). Functionally, part of the ABC transporter complex MetNIQ involved in methionine import. Responsible for energy coupling to the transport system. The protein is Methionine import ATP-binding protein MetN 1 of Acinetobacter baylyi (strain ATCC 33305 / BD413 / ADP1).